Here is a 274-residue protein sequence, read N- to C-terminus: Isoprenyl transferase (274 aa).

Asp49 is a catalytic residue. Asp49 contacts Mg(2+). Substrate contacts are provided by residues 50–53, Phe54, Arg62, His66, and 94–96; these read GNRR and STD. Catalysis depends on Asn97, which acts as the Proton acceptor. Substrate-binding positions include Arg100, Arg223, and 229–231; that span reads RLS. Glu242 is a Mg(2+) binding site.

This sequence belongs to the UPP synthase family. In terms of assembly, homodimer. The cofactor is Mg(2+).

Its function is as follows. Catalyzes the condensation of isopentenyl diphosphate (IPP) with allylic pyrophosphates generating different type of terpenoids. The sequence is that of Isoprenyl transferase from Deinococcus radiodurans (strain ATCC 13939 / DSM 20539 / JCM 16871 / CCUG 27074 / LMG 4051 / NBRC 15346 / NCIMB 9279 / VKM B-1422 / R1).